Here is a 128-residue protein sequence, read N- to C-terminus: Modulator protein MzrA (128 aa).

The Cytoplasmic portion of the chain corresponds to 1-11; the sequence is MMVMKRPSLRQ. The chain crosses the membrane as a helical span at residues 12-32; it reads FSWLLGGSLLLGALFWLWLAV. At 33-128 the chain is on the periplasmic side; the sequence is QQQEATLAIR…RLRDAPHRLG (96 aa).

It belongs to the MzrA family. In terms of assembly, interacts with EnvZ.

It is found in the cell inner membrane. Its function is as follows. Modulates the activity of the EnvZ/OmpR two-component regulatory system, probably by directly modulating EnvZ enzymatic activity and increasing stability of phosphorylated OmpR. In Klebsiella pneumoniae subsp. pneumoniae (strain ATCC 700721 / MGH 78578), this protein is Modulator protein MzrA.